Here is a 316-residue protein sequence, read N- to C-terminus: Transaldolase A (316 aa).

Lys131 acts as the Schiff-base intermediate with substrate in catalysis.

Belongs to the transaldolase family. Type 1 subfamily. In terms of assembly, homodimer.

It localises to the cytoplasm. It carries out the reaction D-sedoheptulose 7-phosphate + D-glyceraldehyde 3-phosphate = D-erythrose 4-phosphate + beta-D-fructose 6-phosphate. It participates in carbohydrate degradation; pentose phosphate pathway; D-glyceraldehyde 3-phosphate and beta-D-fructose 6-phosphate from D-ribose 5-phosphate and D-xylulose 5-phosphate (non-oxidative stage): step 2/3. Functionally, transaldolase is important for the balance of metabolites in the pentose-phosphate pathway. The chain is Transaldolase A from Salmonella typhimurium (strain LT2 / SGSC1412 / ATCC 700720).